We begin with the raw amino-acid sequence, 375 residues long: GDSL esterase/lipase At5g45960 (375 aa).

Residues 1 to 28 (MRSHHRHFSSYVSFILFLFLFFISFSSS) form the signal peptide. The active-site Nucleophile is Ser54. A glycan (N-linked (GlcNAc...) asparagine) is linked at Asn340. Catalysis depends on residues Asp348 and His351.

It belongs to the 'GDSL' lipolytic enzyme family.

It is found in the secreted. This chain is GDSL esterase/lipase At5g45960, found in Arabidopsis thaliana (Mouse-ear cress).